The primary structure comprises 1028 residues: Unconventional myosin-Ic (1028 aa).

An N-acetylmethionine modification is found at Met1. Residues 12-696 enclose the Myosin motor domain; the sequence is GVQDFVLLEN…TLFATEDALE (685 aa). ATP-binding positions include Asn53, Tyr61, 104 to 113, and 157 to 161; these read SGESGAGKTE and NDNSS. Residue Lys348 is modified to N6-methyllysine. An actin-binding region spans residues 573–595; it reads LSKLMEILMSKEPSYIRCIKPND. IQ domains are found at residues 699 to 728 and 722 to 751; these read KQSL…SAIA and MKHS…AVQT. In terms of domain architecture, TH1 spans 850 to 1024; it reads KDNYPQSVPR…NGHLTVVAPR (175 aa).

The protein belongs to the TRAFAC class myosin-kinesin ATPase superfamily. Myosin family. Interacts (via its IQ motifs) with CALM.

The protein resides in the cytoplasm. The protein localises to the cell cortex. It localises to the cell projection. Its subcellular location is the ruffle membrane. It is found in the cytoplasmic vesicle. The protein resides in the stereocilium membrane. Its function is as follows. Myosins are actin-based motor molecules with ATPase activity. Unconventional myosins serve in intracellular movements. Their highly divergent tails are presumed to bind to membranous compartments, which would be moved relative to actin filaments. The protein is Unconventional myosin-Ic (MYO1C) of Gallus gallus (Chicken).